We begin with the raw amino-acid sequence, 651 residues long: Beta-glucuronidase (651 aa).

The N-terminal stretch at 1–22 (MSRGPAGAWVALGPLLWTCGLA) is a signal peptide. 2 N-linked (GlcNAc...) asparagine glycosylation sites follow: Asn-172 and Asn-419. Residue Glu-450 is the Proton donor of the active site. Asn-630 carries N-linked (GlcNAc...) asparagine glycosylation.

Belongs to the glycosyl hydrolase 2 family. Homotetramer.

Its subcellular location is the lysosome. It carries out the reaction a beta-D-glucuronoside + H2O = D-glucuronate + an alcohol. Inhibited by L-aspartic acid. In terms of biological role, plays an important role in the degradation of dermatan and keratan sulfates. This Canis lupus familiaris (Dog) protein is Beta-glucuronidase (GUSB).